The sequence spans 799 residues: Cadherin-8 (799 aa).

An N-terminal signal peptide occupies residues 1-29; that stretch reads MPERLAETLLDLWTPLIILWITLPSFVYM. Positions 30–61 are excised as a propeptide; that stretch reads APMNQAHVLTTGSPLELSRQSEEMRILNRSKR. 5 Cadherin domains span residues 62–167, 168–276, 277–391, 392–494, and 495–616; these read GWVW…APEF, LNGP…PPKF, AQSL…PPVF, SSPT…DNAP, and EFAS…YVLP. The Extracellular segment spans residues 62–621; sequence GWVWNQMFVL…PYVLPIGLSM (560 aa). Asparagine 188 is a glycosylation site (N-linked (GlcNAc...) asparagine). 3 N-linked (GlcNAc...) asparagine glycosylation sites follow: asparagine 463, asparagine 473, and asparagine 544. A helical transmembrane segment spans residues 622–642; the sequence is GALIAILACIILLLVIVVLFV. Residues 643 to 799 are Cytoplasmic-facing; the sequence is TLRRHKNEPL…YSVGESDKET (157 aa). A Phosphoserine modification is found at serine 795.

It localises to the cell membrane. Functionally, cadherins are calcium-dependent cell adhesion proteins. They preferentially interact with themselves in a homophilic manner in connecting cells; cadherins may thus contribute to the sorting of heterogeneous cell types. The sequence is that of Cadherin-8 (Cdh8) from Rattus norvegicus (Rat).